The chain runs to 208 residues: Small ribosomal subunit protein uS4 (208 aa).

An S4 RNA-binding domain is found at 98-158 (SRLDNAVYRL…EKSRNMQVID (61 aa)).

It belongs to the universal ribosomal protein uS4 family. Part of the 30S ribosomal subunit. Contacts protein S5. The interaction surface between S4 and S5 is involved in control of translational fidelity.

One of the primary rRNA binding proteins, it binds directly to 16S rRNA where it nucleates assembly of the body of the 30S subunit. Its function is as follows. With S5 and S12 plays an important role in translational accuracy. The protein is Small ribosomal subunit protein uS4 of Desulfosudis oleivorans (strain DSM 6200 / JCM 39069 / Hxd3) (Desulfococcus oleovorans).